The chain runs to 903 residues: MASVWQRLGFYASLLKRQLNGGPDVIKWERRVIPGCTRSIYSATGKWTKEYTLQTRKDVEKWWHQRIKEQASKISEADKSKPKFYVLSMFPYPSGKLHMGHVRVYTISDTIARFQKMRGMQVINPMGWDAFGLPAENAAVERNLHPESWTQSNIKHMRKQLDRLGLCFSWDREITTCLPDYYKWTQYLFIKLYEAGLAYQKEALVNWDPVDQTVLANEQVDEHGCSWRSGAKVEQKYLRQWFIKTTAYAKAMQDALADLPEWYGIKGMQAHWIGDCVGCHLDFTLKVHGQATGEKLTAYTATPEAIYGTSHVAISPSHRLLHGHSSLKEALRMALVPGKDCLTPVMAVNMLTQQEVPVVILAKADLEGSLDSKIGIPSTSSEDTILAQTLGLAYSEVIETLPDGTERLSSSAEFTGMTRQDAFLALTQKARGKRVGGDVTSDKLKDWLISRQRYWGTPIPIVHCPVCGPTPVPLEDLPVTLPNIASFTGKGGSPLAMASEWVNCSCPRCKGAAKRETDTMDTFVDSAWYYFRYTDPHNPHSPFNTAVADYWMPVDLYIGGKEHAVMHLFYARFFSHFCHDQKMVKHREPFHKLLAQGLIKGQTFRLPSGQYLQREEVDLTGSVPVHAKTKEKLEVTWEKMSKSKHNGVDPEEVVEQYGIDTIRLYILFAAPPEKDILWDVKTDALPGVLRWQQRLWTLTTRFIEARASGKSPQPQLLSNKEKAEARKLWEYKNSVISQVTTHFTEDFSLNSAISQLMGLSGALSQASQSVILHSPEFEDALCALMVMAAPMAPHVTSEIWAGLALVPRKLCAHYTWDVSVLLQAWPAVDPEFLQEPEVVQMAVLINNKACGKIPVPQQVARDQDKVHEFVLQSELGVRLLQGRSIKKSFLSPRTALINFPVQD.

Lys-68 carries the post-translational modification N6-acetyllysine. The short motif at 92–102 (YPSGKLHMGHV) is the 'HIGH' region element. N6-acetyllysine is present on Lys-236. The short motif at 639–643 (KMSKS) is the 'KMSKS' region element. Lys-642 is a binding site for ATP. The residue at position 711 (Ser-711) is a Phosphoserine.

It belongs to the class-I aminoacyl-tRNA synthetase family.

It is found in the mitochondrion matrix. The enzyme catalyses tRNA(Leu) + L-leucine + ATP = L-leucyl-tRNA(Leu) + AMP + diphosphate. The protein is Probable leucine--tRNA ligase, mitochondrial (LARS2) of Pongo abelii (Sumatran orangutan).